A 117-amino-acid chain; its full sequence is Large ribosomal subunit protein uL18 (117 aa).

Belongs to the universal ribosomal protein uL18 family. In terms of assembly, part of the 50S ribosomal subunit; part of the 5S rRNA/L5/L18/L25 subcomplex. Contacts the 5S and 23S rRNAs.

Functionally, this is one of the proteins that bind and probably mediate the attachment of the 5S RNA into the large ribosomal subunit, where it forms part of the central protuberance. The polypeptide is Large ribosomal subunit protein uL18 (Vibrio proteolyticus (Aeromonas proteolytica)).